A 234-amino-acid chain; its full sequence is Staphylococcal superantigen-like 5 (234 aa).

An N-terminal signal peptide occupies residues 1-30 (MKMTAIAKASLALGILATGTITSLHQTVNA).

Belongs to the staphylococcal/streptococcal toxin family. Interacts with host SELPLG; this interaction prevents SELPLG-mediated neutrophil rolling. Interacts with host MMP9 (via sialic acid-containing O-glycans); this interaction inhibits MMP9 activity. Interacts with host GP1BA and GP6; these interactions play an important role in platelet binding and activation.

In terms of biological role, secreted protein that plays a role in the inhibition of host innate immune system. Modulates the interaction between host SELPLG and P-selectin thereby preventing initial rolling of neutrophils toward the site of infection. Interferes with leukocyte trafficking by inhibiting host metalloproteinase-9/MMP9 activity. Also associates with two different platelet surface receptors GP1A and GP6 leading to platelet activation and aggregation. The chain is Staphylococcal superantigen-like 5 from Staphylococcus aureus (strain NCTC 8325 / PS 47).